Consider the following 176-residue polypeptide: Ribonuclease mitogillin (176 aa).

The N-terminal stretch at Met1–Arg27 is a signal peptide. Intrachain disulfides connect Cys32-Cys174 and Cys102-Cys158. The active site involves His76. The active-site Proton acceptor is the Glu122. The active-site Proton donor is His163.

It belongs to the ribonuclease U2 family.

Its subcellular location is the secreted. This purine-specific ribonuclease cleaves 28S RNA in eukaryotic ribosomes, inhibits protein synthesis, and shows antitumor activity. The chain is Ribonuclease mitogillin (mitF) from Aspergillus fumigatus (strain ATCC MYA-4609 / CBS 101355 / FGSC A1100 / Af293) (Neosartorya fumigata).